A 335-amino-acid polypeptide reads, in one-letter code: Glucokinase (335 aa).

ATP is bound at residue 11–16; the sequence is ADIGGT.

The protein belongs to the bacterial glucokinase family.

It is found in the cytoplasm. The enzyme catalyses D-glucose + ATP = D-glucose 6-phosphate + ADP + H(+). This Xanthomonas campestris pv. campestris (strain B100) protein is Glucokinase.